Consider the following 304-residue polypeptide: N-acetylmuramic acid 6-phosphate etherase (304 aa).

The region spanning 62-225 is the SIS domain; the sequence is IVTAFRQGGR…TTASMILMGK (164 aa). Residue Glu-90 is the Proton donor of the active site. The active site involves Glu-121.

Belongs to the GCKR-like family. MurNAc-6-P etherase subfamily. As to quaternary structure, homodimer.

It catalyses the reaction N-acetyl-D-muramate 6-phosphate + H2O = N-acetyl-D-glucosamine 6-phosphate + (R)-lactate. It functions in the pathway amino-sugar metabolism; 1,6-anhydro-N-acetylmuramate degradation. It participates in amino-sugar metabolism; N-acetylmuramate degradation. Its pathway is cell wall biogenesis; peptidoglycan recycling. Its function is as follows. Specifically catalyzes the cleavage of the D-lactyl ether substituent of MurNAc 6-phosphate, producing GlcNAc 6-phosphate and D-lactate. Together with AnmK, is also required for the utilization of anhydro-N-acetylmuramic acid (anhMurNAc) either imported from the medium or derived from its own cell wall murein, and thus plays a role in cell wall recycling. This is N-acetylmuramic acid 6-phosphate etherase from Actinobacillus succinogenes (strain ATCC 55618 / DSM 22257 / CCUG 43843 / 130Z).